Consider the following 192-residue polypeptide: Imidazoleglycerol-phosphate dehydratase (192 aa).

This sequence belongs to the imidazoleglycerol-phosphate dehydratase family.

It localises to the cytoplasm. It carries out the reaction D-erythro-1-(imidazol-4-yl)glycerol 3-phosphate = 3-(imidazol-4-yl)-2-oxopropyl phosphate + H2O. Its pathway is amino-acid biosynthesis; L-histidine biosynthesis; L-histidine from 5-phospho-alpha-D-ribose 1-diphosphate: step 6/9. This chain is Imidazoleglycerol-phosphate dehydratase, found in Caldivirga maquilingensis (strain ATCC 700844 / DSM 13496 / JCM 10307 / IC-167).